The primary structure comprises 156 residues: Cyclic pyranopterin monophosphate synthase (156 aa).

Residues L73 to H75 and M110 to E111 each bind substrate. D125 is an active-site residue.

The protein belongs to the MoaC family. In terms of assembly, homohexamer; trimer of dimers.

It catalyses the reaction (8S)-3',8-cyclo-7,8-dihydroguanosine 5'-triphosphate = cyclic pyranopterin phosphate + diphosphate. It functions in the pathway cofactor biosynthesis; molybdopterin biosynthesis. Functionally, catalyzes the conversion of (8S)-3',8-cyclo-7,8-dihydroguanosine 5'-triphosphate to cyclic pyranopterin monophosphate (cPMP). This Stutzerimonas stutzeri (strain A1501) (Pseudomonas stutzeri) protein is Cyclic pyranopterin monophosphate synthase.